The primary structure comprises 1132 residues: SNF2 domain-containing protein CLASSY 4 (1132 aa).

Disordered regions lie at residues 24 to 104, 224 to 331, 376 to 396, and 525 to 544; these read NKSK…SKSF, LRGE…HHKK, DPVV…PRER, and PSVN…LPNR. The short motif at 47-54 is the Nuclear localization signal element; sequence KRRVNMRD. A compositionally biased stretch (basic and acidic residues) spans 81–90; that stretch reads EYPEGKRDDE. The segment covering 92-103 has biased composition (polar residues); sequence VGSTSGNLQSKS. Residues 233 to 242 show a composition bias toward low complexity; the sequence is SDEVVSLSSS. The span at 243–254 shows a compositional bias: acidic residues; sequence SDDEEDPLEELG. Over residues 255–269 the composition is skewed to basic and acidic residues; it reads TDSREEVSGEDRDSG. Acidic residues-rich tracts occupy residues 270–282 and 291–309; these read ESDM…DSDS and DSSD…EDEE. Basic and acidic residues-rich tracts occupy residues 310–326, 376–392, and 525–539; these read GGTR…SEKV, DPVV…EHGK, and PSVN…RKGD. Residues 603–796 enclose the Helicase ATP-binding domain; that stretch reads SVGVKGSGGC…SNVLCLARPA (194 aa). 616–623 provides a ligand contact to ATP; it reads HKAGTGKT. Positions 747–750 match the DEAH box motif; sequence DEGH. Residues 934–1087 enclose the Helicase C-terminal domain; that stretch reads DFIRISGTVK…ELVFSSTNEK (154 aa).

Belongs to the SNF2/RAD54 helicase family. As to quaternary structure, interacts with NRPD1.

It localises to the nucleus. Functionally, probable chromatin remodeling factor. The chain is SNF2 domain-containing protein CLASSY 4 (CLSY4) from Arabidopsis thaliana (Mouse-ear cress).